The chain runs to 734 residues: MFIRKEIDLGDGKVITIETGKMAKQADGATIVRMGDTMVIATVVSSRTPPSPNQDFFPMQVEYREKYYAAGKFPGGFIKRESRPSEKEILSARLIDRALRPLFPNGYYQDTQIIISVISSDQLNDADVLGGIAASAAIMVSDIPFANSMSEVRVGRINGEFVINPTINELAQSDIDISIGGTNDTICMLEGEMNEISEAEMLEAIRFGHEAIKKICSLQDDIAAEVNKPKRSFLAIDAPDELKESIKEACEAPLKELAYMPLAKEERAEKTTAVYKSITEQILGRYKNEITAEDIAADPSKALYLNEQIISGHIHAIEKQVMRHMILDDAKRLDGRKLEEVRPISIELGLIPRAHGSALFTRGETQALVVLTLGTKKDAQMIDTLLDDTEKRFMLHYNFPPFSVGETGRVGGVGRREIGHGNLAERAVKKVVPSESEFPYTIRLVSEILESNGSSSMASVCGATLAAMDGGVPLTKPVSGIAMGLIKEDDNYAVLSDILGNEDHLGDMDFKVAGTRDGITACQMDIKIDGLDYHILEKALEQSKNGRLHILDKMTESIADPRGEIGQYAPKLSTIQVPVDAIGMIIGKGGETIRSITEETGAQINVDDDGTVTISSPNGESAAAAIETIKTLISKPEVGTIYMGKVKDIREDLGAFVEILPRTDGLVHISEIARERVNKVSDHLKQGDRVKVKLIDIRKDQRSGKIRYALSIKALLDMPAESANGPSAQEEQNQ.

Residues aspartate 503 and aspartate 509 each coordinate Mg(2+). A KH domain is found at 570-629; sequence PKLSTIQVPVDAIGMIIGKGGETIRSITEETGAQINVDDDGTVTISSPNGESAAAAIETI. One can recognise an S1 motif domain in the interval 639-713; that stretch reads GTIYMGKVKD…GKIRYALSIK (75 aa).

The protein belongs to the polyribonucleotide nucleotidyltransferase family. Mg(2+) is required as a cofactor.

Its subcellular location is the cytoplasm. The catalysed reaction is RNA(n+1) + phosphate = RNA(n) + a ribonucleoside 5'-diphosphate. Its function is as follows. Involved in mRNA degradation. Catalyzes the phosphorolysis of single-stranded polyribonucleotides processively in the 3'- to 5'-direction. The protein is Polyribonucleotide nucleotidyltransferase of Chlorobium phaeobacteroides (strain BS1).